A 394-amino-acid chain; its full sequence is Phosphoglycerate kinase (394 aa).

Residues 21–23, R36, 59–62, R118, and R151 contribute to the substrate site; these read DFN and HFGR. ATP contacts are provided by residues K201, E323, and 349-352; that span reads GGDS.

Belongs to the phosphoglycerate kinase family. Monomer.

It localises to the cytoplasm. The enzyme catalyses (2R)-3-phosphoglycerate + ATP = (2R)-3-phospho-glyceroyl phosphate + ADP. It participates in carbohydrate degradation; glycolysis; pyruvate from D-glyceraldehyde 3-phosphate: step 2/5. The chain is Phosphoglycerate kinase from Brevibacillus brevis (strain 47 / JCM 6285 / NBRC 100599).